Reading from the N-terminus, the 338-residue chain is MASAGGCKKKTGNSRSRSPRSPVVLRRAMLHSSLCFLVGLLAGLAAPSDWPAAAGAAVFLRTLRASNVIFSRSSNRPQQPQLVVVVTTTEQSDDSERRAAGLTRTAHALRLVSPPLLWLVVEEAPAEKHAAPPTARLLRRTGVVHRHLLMKQGDDDFSMQISMRREQQRNVALRHIEDHRIAGVVLFGGLADIYDLRLLHHLRDIRTFGAWPVATVSAYERKVMVQGPLCINTSSSSVITRGWFDMDMDMAAGGERRAAADRPPPETLMEVGGFAFSSWMLWDPHRWDRFPLSDPDASQESVKFVQRVAVEEYNQSTTRGMPDSDCSQIMLWRIQTTL.

The interval 1 to 21 is disordered; the sequence is MASAGGCKKKTGNSRSRSPRS. The Cytoplasmic segment spans residues 1–27; it reads MASAGGCKKKTGNSRSRSPRSPVVLRR. The chain crosses the membrane as a helical; Signal-anchor for type II membrane protein span at residues 28–46; that stretch reads AMLHSSLCFLVGLLAGLAA. The Lumenal segment spans residues 47-338; that stretch reads PSDWPAAAGA…IMLWRIQTTL (292 aa). Residues N232 and N314 are each glycosylated (N-linked (GlcNAc...) asparagine).

It belongs to the glycosyltransferase 43 family.

The protein resides in the golgi apparatus membrane. In terms of biological role, probable beta-1,4-xylosyltransferase involved in xylan biosynthesis in cell walls. This chain is Probable beta-1,4-xylosyltransferase IRX9, found in Oryza sativa subsp. japonica (Rice).